We begin with the raw amino-acid sequence, 192 residues long: Holliday junction branch migration complex subunit RuvA (192 aa).

The interval 1–61 is domain I; that stretch reads MFEYLKGIVA…DTGITLYGFL (61 aa). The tract at residues 62-137 is domain II; the sequence is SLEDKELFLK…KLGDYVKKSA (76 aa). The interval 137 to 140 is flexible linker; it reads AVAT. The interval 141–192 is domain III; it reads DLTPSLQDALLALVALGYTQKEVDRITPKLAKLPENTADGYIKEALALLLKK.

It belongs to the RuvA family. As to quaternary structure, homotetramer. Forms an RuvA(8)-RuvB(12)-Holliday junction (HJ) complex. HJ DNA is sandwiched between 2 RuvA tetramers; dsDNA enters through RuvA and exits via RuvB. An RuvB hexamer assembles on each DNA strand where it exits the tetramer. Each RuvB hexamer is contacted by two RuvA subunits (via domain III) on 2 adjacent RuvB subunits; this complex drives branch migration. In the full resolvosome a probable DNA-RuvA(4)-RuvB(12)-RuvC(2) complex forms which resolves the HJ.

It localises to the cytoplasm. In terms of biological role, the RuvA-RuvB-RuvC complex processes Holliday junction (HJ) DNA during genetic recombination and DNA repair, while the RuvA-RuvB complex plays an important role in the rescue of blocked DNA replication forks via replication fork reversal (RFR). RuvA specifically binds to HJ cruciform DNA, conferring on it an open structure. The RuvB hexamer acts as an ATP-dependent pump, pulling dsDNA into and through the RuvAB complex. HJ branch migration allows RuvC to scan DNA until it finds its consensus sequence, where it cleaves and resolves the cruciform DNA. This Lactobacillus gasseri (strain ATCC 33323 / DSM 20243 / BCRC 14619 / CIP 102991 / JCM 1131 / KCTC 3163 / NCIMB 11718 / NCTC 13722 / AM63) protein is Holliday junction branch migration complex subunit RuvA.